We begin with the raw amino-acid sequence, 177 residues long: KxDL motif-containing protein 1 (177 aa).

Met1 carries the N-acetylmethionine modification. Positions 100–177 are disordered; sequence SHIPEGSFLE…TDDEEETHEE (78 aa). A compositionally biased stretch (polar residues) spans 125–145; the sequence is ATSEQSTGSCDTSPDTVSPSL.

The protein belongs to the KXD1 family. In terms of assembly, component of the BLOC-one-related complex (BORC) which is composed of BLOC1S1, BLOC1S2, BORCS5, BORCS6, BORCS7, BORCS8, KXD1 and SNAPIN. Associates with the BLOC-1 complex. Interacts with BLOC1S1. Interacts with DTNBP1/BLOC1S7 (via coiled-coil domain). Widely expressed.

The protein resides in the lysosome membrane. Its function is as follows. As part of the BORC complex may play a role in lysosomes movement and localization at the cell periphery. Associated with the cytosolic face of lysosomes, the BORC complex may recruit ARL8B and couple lysosomes to microtubule plus-end-directed kinesin motor. May also be involved in the biogenesis of lysosome-related organelles such as melanosomes. The chain is KxDL motif-containing protein 1 (Kxd1) from Mus musculus (Mouse).